The chain runs to 61 residues: L-amino-acid oxidase (61 aa).

43-44 serves as a coordination point for FAD; that stretch reads MA.

This sequence belongs to the flavin monoamine oxidase family. FIG1 subfamily. As to quaternary structure, homodimer; non-covalently linked. FAD is required as a cofactor. Post-translationally, N-glycosylated. In terms of tissue distribution, expressed by the venom gland.

It is found in the secreted. It carries out the reaction an L-alpha-amino acid + O2 + H2O = a 2-oxocarboxylate + H2O2 + NH4(+). The catalysed reaction is L-leucine + O2 + H2O = 4-methyl-2-oxopentanoate + H2O2 + NH4(+). In terms of biological role, catalyzes an oxidative deamination of predominantly hydrophobic and aromatic L-amino acids, thus producing hydrogen peroxide that may contribute to the diverse toxic effects of this enzyme. Shows activity on L-Leu. Exhibits diverse biological activities, such as apoptosis, antibacterial activities against both Gram-negative and Gram-positive bacteria and antiparasitic activities, as well as induction of platelet aggregation. Effects of snake L-amino oxidases on platelets are controversial, since they either induce aggregation or inhibit agonist-induced aggregation. These different effects are probably due to different experimental conditions. This protein may also induce hemorrhage, hemolysis, and edema. This Crotalus durissus cascavella (Northeastern Brazilian rattlesnake) protein is L-amino-acid oxidase.